The sequence spans 130 residues: Lipoprotein LpqS (130 aa).

The signal sequence occupies residues 1-23 (MVWMRSAIVAVALGVTVAAVAAA). Cys24 is lipidated: N-palmitoyl cysteine. The S-diacylglycerol cysteine moiety is linked to residue Cys24.

The protein resides in the cell membrane. Functionally, may play an essential role in M.tuberculosis replication and survival inside the host cell. In Mycobacterium tuberculosis (strain ATCC 25618 / H37Rv), this protein is Lipoprotein LpqS.